The sequence spans 225 residues: MADS-box transcription factor 5 (225 aa).

Residues 1 to 61 (MGRGKVELKR…GRLFEFSTSS (61 aa)) enclose the MADS-box domain. One can recognise a K-box domain in the interval 89 to 179 (ELSNYQEYLK…KRKIQETSGE (91 aa)).

May interact with the K-box of MADS6.

The protein localises to the nucleus. Probable transcription factor. The protein is MADS-box transcription factor 5 (MADS5) of Oryza sativa subsp. indica (Rice).